An 84-amino-acid polypeptide reads, in one-letter code: UPF0473 protein CLD_2004 (84 aa).

Belongs to the UPF0473 family.

The protein is UPF0473 protein CLD_2004 of Clostridium botulinum (strain Okra / Type B1).